Here is a 1228-residue protein sequence, read N- to C-terminus: Multimerin-1 (1228 aa).

The N-terminal stretch at 1-19 (MKGARLFVLLSSLWSGGIG) is a signal peptide. N-linked (GlcNAc...) asparagine glycosylation is present at asparagine 21. The disordered stretch occupies residues 68–98 (TPEARTSEDSLLKSTLPPSETSAPAEGVRNQ). Residues 79 to 89 (LKSTLPPSETS) are compositionally biased toward polar residues. 3 N-linked (GlcNAc...) asparagine glycosylation sites follow: asparagine 97, asparagine 114, and asparagine 120. N-linked (GlcNAc...) (complex) asparagine glycosylation occurs at asparagine 136. Positions 157 to 200 (NTVGGTGGIGGVGGTGGVGNRAPRETYLSRGDSSSSQRTDYQKS) are disordered. Residues 160–175 (GGTGGIGGVGGTGGVG) are compositionally biased toward gly residues. Positions 186 to 188 (RGD) match the Cell attachment site motif. Positions 187–200 (GDSSSSQRTDYQKS) are enriched in polar residues. One can recognise an EMI domain in the interval 207–282 (GKNWCAYVHT…PGYSGPKCQL (76 aa)). 3 disulfide bridges follow: cysteine 211–cysteine 272, cysteine 238–cysteine 245, and cysteine 271–cysteine 280. A glycan (O-linked (Fuc) threonine) is linked at threonine 216. Threonine 265 carries an O-linked (Fuc) threonine glycan. Coiled coils occupy residues 333 to 365 (MKLT…KVSE) and 400 to 430 (NDMQ…IQKV). A glycan (N-linked (GlcNAc...) asparagine) is linked at asparagine 344. N-linked (GlcNAc...) asparagine glycans are attached at residues asparagine 431, asparagine 507, asparagine 541, asparagine 576, asparagine 618, asparagine 680, asparagine 729, asparagine 783, asparagine 816, asparagine 828, asparagine 840, asparagine 921, asparagine 933, asparagine 942, asparagine 981, and asparagine 1020. Residues 503–523 (YESLNKTLSKLKEVHEQLLST) are a coiled coil. Coiled coils occupy residues 580-650 (SLEM…EILQ) and 675-726 (RKKI…EMED). A coiled-coil region spans residues 819–869 (NFQKMYQMFNETTSQVRKYQQNMSHLEEKLLLTTKISKNFETRLQDIESKV). The 37-residue stretch at 1041 to 1077 (EYSSCSRHPCQNGGTCINGRTSFTCACRHPFTGDNCT) folds into the EGF-like domain. 3 cysteine pairs are disulfide-bonded: cysteine 1045–cysteine 1056, cysteine 1050–cysteine 1065, and cysteine 1067–cysteine 1076. Residue threonine 1055 is glycosylated (O-linked (Fuc) threonine). A glycan (N-linked (GlcNAc...) asparagine) is linked at asparagine 1075. Residues 1096–1228 (RYAPMVAFFA…TFSGYLLYRT (133 aa)) enclose the C1q domain.

In terms of assembly, multimeric. Composed of varying sized, disulfide-linked multimers, the smallest of which is a homotrimer. Proteolysis of the promultimerin in the N-terminal region, leads to the mature p155 form that is stored in platelets. Interacts with factor V/Va. The N-terminus is blocked. In terms of processing, extensively N-glycosylated. Post-translationally, O-fucosylated within the EMI domain (at Thr-216 and Thr-265) by FUT10/POFUT3 and FUT11/POFUT4. O-fucosylation at Thr-216 and Thr-1055 are required for facilitating protein folding and secretion. In terms of tissue distribution, synthesized by endothelial cells and megakaryocytes. Stored in platelet alpha granules and endothelial cell Weibel-Palade bodies, following activation of these cells, it is released and attached to megakaryocytes, platelets, endothelium and subendothelium of blood vessels. Not found in plasma. Found in vascular tissues such as placenta, lung, and liver.

It localises to the secreted. Carrier protein for platelet (but not plasma) factor V/Va. Plays a role in the storage and stabilization of factor V in platelets. Upon release following platelet activation, may limit platelet and plasma factor Va-dependent thrombin generation. Ligand for integrin alpha-IIb/beta-3 and integrin alpha-V/beta-3 on activated platelets, and may function as an extracellular matrix or adhesive protein. This is Multimerin-1 (MMRN1) from Homo sapiens (Human).